The sequence spans 104 residues: MSSVPASAYLTLAIILFCIGLFGALTKRNTVIVLVCIELMLNAANLNLVAFSKLGLFPNVTGQIFSLFTMAVAAAEAAVGLAILIALYRNRTTVHVDEMDTLKG.

The next 3 helical transmembrane spans lie at 4 to 24 (VPAS…LFGA), 31 to 51 (VIVL…LVAF), and 67 to 87 (LFTM…LIAL).

The protein belongs to the complex I subunit 4L family. In terms of assembly, NDH-1 is composed of 14 different subunits. Subunits NuoA, H, J, K, L, M, N constitute the membrane sector of the complex.

The protein resides in the cell membrane. It carries out the reaction a quinone + NADH + 5 H(+)(in) = a quinol + NAD(+) + 4 H(+)(out). Functionally, NDH-1 shuttles electrons from NADH, via FMN and iron-sulfur (Fe-S) centers, to quinones in the respiratory chain. The immediate electron acceptor for the enzyme in this species is believed to be a menaquinone. Couples the redox reaction to proton translocation (for every two electrons transferred, four hydrogen ions are translocated across the cytoplasmic membrane), and thus conserves the redox energy in a proton gradient. This is NADH-quinone oxidoreductase subunit K from Bacillus cereus (strain Q1).